A 408-amino-acid chain; its full sequence is 8-amino-7-oxononanoate synthase (408 aa).

Arginine 20 contributes to the substrate binding site. Residue 117 to 118 coordinates pyridoxal 5'-phosphate; that stretch reads GY. Histidine 142 contacts substrate. 3 residues coordinate pyridoxal 5'-phosphate: serine 188, histidine 216, and threonine 244. Position 247 is an N6-(pyridoxal phosphate)lysine (lysine 247). Threonine 367 is a substrate binding site.

The protein belongs to the class-II pyridoxal-phosphate-dependent aminotransferase family. BioF subfamily. Homodimer. Pyridoxal 5'-phosphate serves as cofactor.

It catalyses the reaction 6-carboxyhexanoyl-[ACP] + L-alanine + H(+) = (8S)-8-amino-7-oxononanoate + holo-[ACP] + CO2. The protein operates within cofactor biosynthesis; biotin biosynthesis. Functionally, catalyzes the decarboxylative condensation of pimeloyl-[acyl-carrier protein] and L-alanine to produce 8-amino-7-oxononanoate (AON), [acyl-carrier protein], and carbon dioxide. This is 8-amino-7-oxononanoate synthase from Cupriavidus pinatubonensis (strain JMP 134 / LMG 1197) (Cupriavidus necator (strain JMP 134)).